The primary structure comprises 225 residues: tRNA 2'-phosphotransferase 1 (225 aa).

The segment at 1-21 (MDCETRGRGRRGRGNRNEESR) is disordered.

This sequence belongs to the KptA/TPT1 family.

It carries out the reaction 2'-phospho-[ligated tRNA] + NAD(+) = mature tRNA + ADP-alpha-D-ribose 1'',2''-cyclic phosphate + nicotinamide. Its function is as follows. Catalyzes the last step of tRNA splicing, the transfer of the splice junction 2'-phosphate from ligated tRNA to NAD to produce ADP-ribose 1''-2'' cyclic phosphate. The chain is tRNA 2'-phosphotransferase 1 (trpt1) from Danio rerio (Zebrafish).